The sequence spans 175 residues: 6,7-dimethyl-8-ribityllumazine synthase (175 aa).

5-amino-6-(D-ribitylamino)uracil-binding positions include F24, 58-60 (ALE), and 82-84 (AVI). A (2S)-2-hydroxy-3-oxobutyl phosphate-binding site is contributed by 87-88 (ET). H90 functions as the Proton donor in the catalytic mechanism. A 5-amino-6-(D-ribitylamino)uracil-binding site is contributed by N115. A (2S)-2-hydroxy-3-oxobutyl phosphate-binding site is contributed by R129. The disordered stretch occupies residues 150–175 (ALEPEEDDEDEDDEDEDFDDEEDDGR). Acidic residues predominate over residues 152-175 (EPEEDDEDEDDEDEDFDDEEDDGR).

It belongs to the DMRL synthase family.

It catalyses the reaction (2S)-2-hydroxy-3-oxobutyl phosphate + 5-amino-6-(D-ribitylamino)uracil = 6,7-dimethyl-8-(1-D-ribityl)lumazine + phosphate + 2 H2O + H(+). It participates in cofactor biosynthesis; riboflavin biosynthesis; riboflavin from 2-hydroxy-3-oxobutyl phosphate and 5-amino-6-(D-ribitylamino)uracil: step 1/2. Catalyzes the formation of 6,7-dimethyl-8-ribityllumazine by condensation of 5-amino-6-(D-ribitylamino)uracil with 3,4-dihydroxy-2-butanone 4-phosphate. This is the penultimate step in the biosynthesis of riboflavin. The polypeptide is 6,7-dimethyl-8-ribityllumazine synthase (Bordetella bronchiseptica (strain ATCC BAA-588 / NCTC 13252 / RB50) (Alcaligenes bronchisepticus)).